Consider the following 240-residue polypeptide: MIENWHRGFVLHRREYSETSLLVDFFTEEHGRITLLAKGARRPHSPLKAVLQPFTPLLLRWSGKGDLKTLTKAEPASLTLPMQTLALYSGFYVNEVLARVLENQTAYPELFQHYLQCMTRLATQPEQIEPILRTFEFQMLKALGYGVNFSICAATGDPVSPSMTYQFRENQGFIASLLQNNYTFLGKDLLAFEQLDFSDKATLQAAKRFTRMALKPYLGSQPLKSRELFQNILPNKLKSG.

The protein belongs to the RecO family.

Functionally, involved in DNA repair and RecF pathway recombination. The chain is DNA repair protein RecO from Actinobacillus pleuropneumoniae serotype 3 (strain JL03).